Consider the following 146-residue polypeptide: Large ribosomal subunit protein uL15 (146 aa).

The disordered stretch occupies residues 1–54; sequence MKLHELKPAAGSRKAPKRVGRGTGSGLGRNAGKGEKGQNARSGGGVRPGFEGGQ. Gly residues-rich tracts occupy residues 21–31 and 42–52; these read RGTGSGLGRNA and SGGGVRPGFEG.

This sequence belongs to the universal ribosomal protein uL15 family. In terms of assembly, part of the 50S ribosomal subunit.

Its function is as follows. Binds to the 23S rRNA. In Clostridium acetobutylicum (strain ATCC 824 / DSM 792 / JCM 1419 / IAM 19013 / LMG 5710 / NBRC 13948 / NRRL B-527 / VKM B-1787 / 2291 / W), this protein is Large ribosomal subunit protein uL15.